The following is a 566-amino-acid chain: 4-hydroxy-7-methoxy-3-oxo-3,4-dihydro-2H-1,4-benzoxazin-2-yl glucoside beta-D-glucosidase 1, chloroplastic (566 aa).

A chloroplast-targeting transit peptide spans 1–54; it reads MAPLLAAAMNHAAAHPGLRSHLVGPNNESFSRHHLPSSSPQSSKRRCNLSFTTR. The interval 17–47 is disordered; the sequence is GLRSHLVGPNNESFSRHHLPSSSPQSSKRRC. A beta-D-glucoside-binding positions include Gln-92, His-196, and 244-245; that span reads NE. Glu-245 serves as the catalytic Proton donor. The cysteines at positions 264 and 270 are disulfide-linked. The segment at 325-361 is dimerization; it reads SFLDKQAEERSWDINLGWFLEPVVRGDYPFSMRSLAR. Position 387 (Tyr-387) interacts with a beta-D-glucoside. Dimerization regions lie at residues 394 to 405 and 450 to 453; these read NIDISPNYSPVL and KYGN. Residues Glu-460, Trp-511, 518-519, and Tyr-527 each bind a beta-D-glucoside; that span reads EW. Glu-460 serves as the catalytic Nucleophile.

This sequence belongs to the glycosyl hydrolase 1 family. Homo- and heterodimer. In terms of tissue distribution, expressed in all seedling parts. Most abundant in the coleoptile.

It localises to the plastid. It is found in the chloroplast. The enzyme catalyses Hydrolysis of terminal, non-reducing beta-D-glucosyl residues with release of beta-D-glucose.. The catalysed reaction is DIMBOA beta-D-glucoside + H2O = DIMBOA + D-glucose. It carries out the reaction DIBOA beta-D-glucoside + H2O = DIBOA + D-glucose. With respect to regulation, reversibly inhibited by micromolar concentrations of Hg(2+) or Ag(+), but irreversibly inhibited by alkylation in presence of urea. Competitive inhibition by p-nitrophenyl beta-D-thioglucoside (pNPTGlc), glucotetrazole, and para-hydroxy-S-mandelonitrile beta-glucoside (dhurrin). Is implicated in many functions such as ABA metabolism, hydrolysis of conjugated gibberellins, conversion of storage forms of cytokinins to active forms. Also acts in defense of young plant parts against pests via the production of hydroxamic acids from hydroxamic acid glucosides. Enzymatic activity is highly correlated with plant growth. The preferred substrate is DIMBOA-beta-D-glucoside. Hydrolyzes the chromogenic substrate 6-bromo-2-naphthyl-beta-D-glucoside (6BNGlc) and various artificial aryl beta-glucosides. No activity with cellobiose, arbutin, gentiobiose, linamarin or dhurrin as substrates. The sequence is that of 4-hydroxy-7-methoxy-3-oxo-3,4-dihydro-2H-1,4-benzoxazin-2-yl glucoside beta-D-glucosidase 1, chloroplastic (GLU1) from Zea mays (Maize).